A 521-amino-acid polypeptide reads, in one-letter code: MPPRKKETVMSEFERKRLENIAYNNAILSGISTTADKIIPKPAPPKPKRASTPRVKREPVKKEAARPTRQSSRLAGLEADSAVLKRKLDVEAEEEAAKAKAKRMRVSGDLNLGDITVEGRKWESSADGLALLKGLGVRGAQPGVRTFTEKDVKHTKDKGLKDLRLRMSGLKLYEKWAVNDIKIVPQRIYSMCFHPTEEKPIIFAGDKEGAMGVFDASQPTPKIEDDDEDAEYPDPIISAFKTHSRTISSFHFSPTDANAIYSASYDSSIRKLDLDKGISTEIFAPSSSSEDLPISAIDIPTTDPNMIIFSTLHGSLGRQDQRTKPSSAEIWGLTDHKIGGFSLHPRHPYLVATASLDRTLKIWDLRKITGKGDLRHPALLGEHESRLSVSHASWSSSGHIATSSYDDRIKIYSFPSAGEWKAGHDIPAKEMQPTVEIPHNNQTGRWVTILKPQWQRNPQDGWQKFAIGNMNRFVDVYAEDGEQLAQLGGDGITAVPAVAHFHPTKDWVAGGTASGKLCLWM.

A disordered region spans residues 36–75 (DKIIPKPAPPKPKRASTPRVKREPVKKEAARPTRQSSRLA). The segment covering 55–66 (VKREPVKKEAAR) has biased composition (basic and acidic residues). WD repeat units follow at residues 183-224 (IVPQ…PKIE), 242-282 (THSR…STEI), 333-373 (LTDH…GKGD), 382-422 (EHES…EWKA), and 490-521 (DGIT…CLWM).

It belongs to the WD repeat DDB2/WDR76 family.

Its function is as follows. DNA-binding protein that binds to both single- and double-stranded DNA. Binds preferentially to UV-damaged DNA. May be involved in DNA-metabolic processes. This is DNA damage-binding protein cmr1 from Neurospora crassa (strain ATCC 24698 / 74-OR23-1A / CBS 708.71 / DSM 1257 / FGSC 987).